Consider the following 215-residue polypeptide: MPQTLGFRELGQMAYEPVWQAMQRFTNERGTDAPDEVWLVQHPPVFTQGQAGKAEHLLLPGDIPVVQVDRGGQVTYHGPGQLVAYLLLDVRRLGFGVRDLVNRMEHCLIELLASYGVPAAAKPDAPGVYVNGAKIASLGLRIRHGCSFHGLALNVDMDLQPFRRINPCGYAGLAMTQLSDHAGPIEFAEVSARLRAQLVKHLDYAEQTTLTGGID.

The BPL/LPL catalytic domain occupies threonine 31–glutamate 206. Substrate is bound by residues arginine 70–histidine 77, serine 137–glycine 139, and glycine 150–alanine 152. The active-site Acyl-thioester intermediate is the cysteine 168.

The protein belongs to the LipB family.

Its subcellular location is the cytoplasm. It carries out the reaction octanoyl-[ACP] + L-lysyl-[protein] = N(6)-octanoyl-L-lysyl-[protein] + holo-[ACP] + H(+). Its pathway is protein modification; protein lipoylation via endogenous pathway; protein N(6)-(lipoyl)lysine from octanoyl-[acyl-carrier-protein]: step 1/2. Catalyzes the transfer of endogenously produced octanoic acid from octanoyl-acyl-carrier-protein onto the lipoyl domains of lipoate-dependent enzymes. Lipoyl-ACP can also act as a substrate although octanoyl-ACP is likely to be the physiological substrate. This Pseudomonas fluorescens (strain ATCC BAA-477 / NRRL B-23932 / Pf-5) protein is Octanoyltransferase.